The chain runs to 844 residues: Patched-related protein 9 (844 aa).

Positions 264-421 constitute an SSD domain; it reads LIPWMPWTSL…VTFFNAVMSL (158 aa).

Belongs to the patched family.

The chain is Patched-related protein 9 (ptr-9) from Caenorhabditis elegans.